The following is a 347-amino-acid chain: Tetraacyldisaccharide 4'-kinase (347 aa).

54–61 (TVGGAGKT) is a binding site for ATP.

The protein belongs to the LpxK family.

The enzyme catalyses a lipid A disaccharide + ATP = a lipid IVA + ADP + H(+). It participates in glycolipid biosynthesis; lipid IV(A) biosynthesis; lipid IV(A) from (3R)-3-hydroxytetradecanoyl-[acyl-carrier-protein] and UDP-N-acetyl-alpha-D-glucosamine: step 6/6. Transfers the gamma-phosphate of ATP to the 4'-position of a tetraacyldisaccharide 1-phosphate intermediate (termed DS-1-P) to form tetraacyldisaccharide 1,4'-bis-phosphate (lipid IVA). In Rhizobium etli (strain CIAT 652), this protein is Tetraacyldisaccharide 4'-kinase.